The primary structure comprises 430 residues: Lipoyl synthase, mitochondrial (430 aa).

Residues 1-37 (MAASTGKLRTLFSAHSSLSARPSSALPALRLTILRSY) constitute a mitochondrion transit peptide. The span at 40–56 (TTPPDSSISDPSNSSTT) shows a compositional bias: low complexity. Positions 40 to 63 (TTPPDSSISDPSNSSTTVKRPPTA) are disordered. [4Fe-4S] cluster is bound by residues Cys141, Cys146, Cys152, Cys172, Cys176, Cys179, and Ser387. Residues 155–376 (GSSKSAATAT…KERALEMGFL (222 aa)) enclose the Radical SAM core domain.

Belongs to the radical SAM superfamily. Lipoyl synthase family. [4Fe-4S] cluster serves as cofactor.

The protein localises to the mitochondrion. It catalyses the reaction [[Fe-S] cluster scaffold protein carrying a second [4Fe-4S](2+) cluster] + N(6)-octanoyl-L-lysyl-[protein] + 2 oxidized [2Fe-2S]-[ferredoxin] + 2 S-adenosyl-L-methionine + 4 H(+) = [[Fe-S] cluster scaffold protein] + N(6)-[(R)-dihydrolipoyl]-L-lysyl-[protein] + 4 Fe(3+) + 2 hydrogen sulfide + 2 5'-deoxyadenosine + 2 L-methionine + 2 reduced [2Fe-2S]-[ferredoxin]. The protein operates within protein modification; protein lipoylation via endogenous pathway; protein N(6)-(lipoyl)lysine from octanoyl-[acyl-carrier-protein]: step 2/2. Functionally, catalyzes the radical-mediated insertion of two sulfur atoms into the C-6 and C-8 positions of the octanoyl moiety bound to the lipoyl domains of lipoate-dependent enzymes, thereby converting the octanoylated domains into lipoylated derivatives. The protein is Lipoyl synthase, mitochondrial of Ajellomyces dermatitidis (strain ER-3 / ATCC MYA-2586) (Blastomyces dermatitidis).